A 336-amino-acid polypeptide reads, in one-letter code: NEDD4 family-interacting protein 2 (336 aa).

Disordered stretches follow at residues 1–24 and 37–156; these read MARR…RGAP and SAAA…SITV. The Cytoplasmic portion of the chain corresponds to 1-231; sequence MARRRSQRVC…ADQLRVGNDG (231 aa). The segment covering 37-48 has biased composition (low complexity); it reads SAAAAGATGSEE. The segment covering 78–99 has biased composition (basic and acidic residues); it reads EHGEDSLSRKPDPEPGRMDHHQ. An interaction with NEDD4 region spans residues 148–151; sequence PPPY. The PPxY motif 1 signature appears at 148-151; that stretch reads PPPY. Phosphotyrosine; by SRC is present on residues Tyr-151, Tyr-167, Tyr-171, and Tyr-177. Short sequence motifs (PPxY motif) lie at residues 174–177 and 184–186; these read PPPY and PTY. A helical membrane pass occupies residues 232 to 252; it reads IFMLAFFMAFIFNWLGFCLSF. Over 253–257 the chain is Extracellular; it reads CITNT. Residues 258-278 form a helical membrane-spanning segment; it reads IAGRYGAICGFGLSLIKWILI. Residues 279 to 287 lie on the Cytoplasmic side of the membrane; it reads VRFSDYFTG. The chain crosses the membrane as a helical span at residues 288–308; it reads YFNGQYWLWWIFLVLGLLLFF. At 309–336 the chain is on the extracellular side; sequence RGFVNYLKVRNMSESMAAAHRTRYFFLL.

In terms of assembly, forms heterodimers with NDFIP1. Interacts with HECT domain-containing E3 ubiquitin-protein ligases, including NEDD4. Interacts with NEDD4L. Interacts with PTEN. When phosphorylated at Tyr-167, interacts with SRC and LYN SH2 domain. May thus act as a scaffold that recruits SRC to NDFIP1, enhancing NDFIP1 phosphorylation. Interacts with SLC11A2/DMT1. May interact with phosphorylated EGFR. Interacts with KCNH2. Post-translationally, ubiquitinated by NEDD4 and ITCH. Also ubiquitinated by NEDD4L. Ubiquitination by NEDD4 or NEDD4L does not affect turnover. In terms of processing, undergoes transient tyrosine-phosphorylation following EGF stimulation, most probably catalyzed by SRC. Phosphorylation on Tyr-151, Tyr-171 and Tyr-177 are dependent on the phosphorylation on Tyr-167. Also phosphorylated by LYN and FYN. In terms of tissue distribution, expressed in brain, lung, heart, skeletal muscle, kidney, liver and placenta.

The protein localises to the endosome membrane. It is found in the golgi apparatus membrane. Its subcellular location is the endosome. It localises to the multivesicular body membrane. In terms of biological role, activates HECT domain-containing E3 ubiquitin-protein ligases, including ITCH, NEDD4, NEDD4L, SMURF2, WWP1 and WWP2, and consequently modulates the stability of their targets. As a result, may control many cellular processes. Recruits ITCH, NEDD4 and SMURF2 to endosomal membranes. Negatively regulates KCNH2 potassium channel activity by decreasing its cell-surface expression and interfering with channel maturation through recruitment of NEDD4L to the Golgi apparatus and multivesicular body where it mediates KCNH2 degradation. May modulate EGFR signaling. Together with NDFIP1, limits the cytokine signaling and expansion of effector Th2 T-cells by promoting degradation of JAK1, probably by ITCH- and NEDD4L-mediated ubiquitination. The protein is NEDD4 family-interacting protein 2 (NDFIP2) of Homo sapiens (Human).